The sequence spans 242 residues: Lysosomal membrane ascorbate-dependent ferrireductase CYB561A3 (242 aa).

Topologically, residues 1-7 are cytoplasmic; the sequence is MVSGRFY. Residues 8–28 form a helical membrane-spanning segment; that stretch reads LSCLLLGSLGSMCILFTIYWM. The Cytochrome b561 domain occupies 12–219; sequence LLGSLGSMCI…FGLLVLYILL (208 aa). Residues 29–45 are Lumenal-facing; sequence QYWRGGFAWNGSIYMFN. Asn38 carries N-linked (GlcNAc...) asparagine glycosylation. Residues 46–66 form a helical membrane-spanning segment; the sequence is WHPVLMVAGMVVFYGGASLVY. The heme b site is built by His47 and Arg67. Topologically, residues 67–83 are cytoplasmic; that stretch reads RLPQSWVGPKLPWKLLH. The L-ascorbate site is built by Lys76 and Lys80. A heme b-binding site is contributed by His83. The chain crosses the membrane as a helical span at residues 84 to 104; sequence AALHLMAFVLTVVGLVAVFTF. Topologically, residues 105 to 119 are lumenal; it reads HNHGRTANLYSLHSW. Heme b contacts are provided by residues 112 to 115 and His117; that span reads NLYS. Residues 120-140 traverse the membrane as a helical segment; it reads LGITTVFLFACQWFLGFAVFL. The Cytoplasmic portion of the chain corresponds to 141–154; that stretch reads LPWASMWLRSLLKP. L-ascorbate is bound at residue Arg149. A helical transmembrane segment spans residues 155–175; sequence IHVFFGAAILSLSIASVISGI. Heme b-binding residues include His156 and Glu177. The Lumenal segment spans residues 176 to 202; it reads NEKLFFSLKNTTRPYHSLPSEAVFANS. The chain crosses the membrane as a helical span at residues 203–223; it reads TGMLVVAFGLLVLYILLASSW. Residue Lys224 coordinates heme b. The Cytoplasmic segment spans residues 224–242; that stretch reads KRPEPGILTDRQPLLHDGE.

Homodimer. It depends on heme b as a cofactor. In terms of processing, N-glycosylated.

The protein localises to the late endosome membrane. The protein resides in the lysosome membrane. It catalyses the reaction Fe(3+)(out) + L-ascorbate(in) = monodehydro-L-ascorbate radical(in) + Fe(2+)(out) + H(+). Transmembrane reductase that uses ascorbate as an electron donor in the cytoplasm and transfers electrons across membranes to reduce iron cations Fe(3+) into Fe(2+) in the lumen of the late endosome and lysosome. Reduced iron can then be extruded from the late endosome and lysosome to the cytoplasm by divalent metal-specific transporters. It is therefore most probably involved in endosomal and lysosomal cellular iron homeostasis. The chain is Lysosomal membrane ascorbate-dependent ferrireductase CYB561A3 from Homo sapiens (Human).